Here is a 150-residue protein sequence, read N- to C-terminus: Cytochrome c oxidase subunit 5A, mitochondrial (150 aa).

The N-terminal 41 residues, 1–41, are a transit peptide targeting the mitochondrion; that stretch reads MLGAALRRCAVAATAWAGPRGLLHSAPTPGPAAAIHSVRCY. Positions 2–17 match the SIFI-degron motif; the sequence is LGAALRRCAVAATAWA. N6-acetyllysine occurs at positions 87 and 113. Thr-141 carries the post-translational modification Phosphothreonine.

The protein belongs to the cytochrome c oxidase subunit 5A family. In terms of assembly, component of the cytochrome c oxidase (complex IV, CIV), a multisubunit enzyme composed of 14 subunits. The complex is composed of a catalytic core of 3 subunits MT-CO1, MT-CO2 and MT-CO3, encoded in the mitochondrial DNA, and 11 supernumerary subunits COX4I, COX5A, COX5B, COX6A, COX6B, COX6C, COX7A, COX7B, COX7C, COX8 and NDUFA4, which are encoded in the nuclear genome. The complex exists as a monomer or a dimer and forms supercomplexes (SCs) in the inner mitochondrial membrane with NADH-ubiquinone oxidoreductase (complex I, CI) and ubiquinol-cytochrome c oxidoreductase (cytochrome b-c1 complex, complex III, CIII), resulting in different assemblies (supercomplex SCI(1)III(2)IV(1) and megacomplex MCI(2)III(2)IV(2)). Interacts with AFG1L. Interacts with RAB5IF. In terms of processing, in response to mitochondrial stress, the precursor protein is ubiquitinated by the SIFI complex in the cytoplasm before mitochondrial import, leading to its degradation. Within the SIFI complex, UBR4 initiates ubiquitin chain that are further elongated or branched by KCMF1.

The protein resides in the mitochondrion inner membrane. Its pathway is energy metabolism; oxidative phosphorylation. Component of the cytochrome c oxidase, the last enzyme in the mitochondrial electron transport chain which drives oxidative phosphorylation. The respiratory chain contains 3 multisubunit complexes succinate dehydrogenase (complex II, CII), ubiquinol-cytochrome c oxidoreductase (cytochrome b-c1 complex, complex III, CIII) and cytochrome c oxidase (complex IV, CIV), that cooperate to transfer electrons derived from NADH and succinate to molecular oxygen, creating an electrochemical gradient over the inner membrane that drives transmembrane transport and the ATP synthase. Cytochrome c oxidase is the component of the respiratory chain that catalyzes the reduction of oxygen to water. Electrons originating from reduced cytochrome c in the intermembrane space (IMS) are transferred via the dinuclear copper A center (CU(A)) of subunit 2 and heme A of subunit 1 to the active site in subunit 1, a binuclear center (BNC) formed by heme A3 and copper B (CU(B)). The BNC reduces molecular oxygen to 2 water molecules using 4 electrons from cytochrome c in the IMS and 4 protons from the mitochondrial matrix. In Saimiri sciureus (Common squirrel monkey), this protein is Cytochrome c oxidase subunit 5A, mitochondrial (COX5A).